The sequence spans 906 residues: Protein translocase subunit SecA (906 aa).

ATP contacts are provided by residues Gln-89, 107-111, and Asp-502; that span reads GEGKT. Positions 885, 887, 896, and 897 each coordinate Zn(2+).

The protein belongs to the SecA family. In terms of assembly, monomer and homodimer. Part of the essential Sec protein translocation apparatus which comprises SecA, SecYEG and auxiliary proteins SecDF-YajC and YidC. The cofactor is Zn(2+).

The protein resides in the cell inner membrane. It is found in the cytoplasm. It carries out the reaction ATP + H2O + cellular proteinSide 1 = ADP + phosphate + cellular proteinSide 2.. Its function is as follows. Part of the Sec protein translocase complex. Interacts with the SecYEG preprotein conducting channel. Has a central role in coupling the hydrolysis of ATP to the transfer of proteins into and across the cell membrane, serving both as a receptor for the preprotein-SecB complex and as an ATP-driven molecular motor driving the stepwise translocation of polypeptide chains across the membrane. In Rhizobium rhizogenes (strain K84 / ATCC BAA-868) (Agrobacterium radiobacter), this protein is Protein translocase subunit SecA.